The primary structure comprises 393 residues: Cytohesin-4 (393 aa).

Residues 13 to 56 (SGEAKELQQIKWHRKQLLEDIQKLKDEIADVFAQIDCFESTEES) adopt a coiled-coil conformation. One can recognise an SEC7 domain in the interval 54-241 (EESRMAQKEK…RNLFDSIKSE (188 aa)). A PH domain is found at 259 to 375 (NPDREGWLLK…WIEAIRASIT (117 aa)). A 1,2-diacyl-sn-glycero-3-phospho-(1D-myo-inositol-3,4,5-trisphosphate) contacts are provided by residues 268 to 275 (KLGGRVKT), Arg279, Tyr290, and Arg300. The segment at 386-393 (RKKKIVGK) is C-terminal autoinhibitory region.

Its subcellular location is the cell membrane. In terms of biological role, promotes guanine-nucleotide exchange on ARF1 and ARF5. Promotes the activation of ARF factors through replacement of GDP with GTP. The sequence is that of Cytohesin-4 (Cyth4) from Mus musculus (Mouse).